A 477-amino-acid chain; its full sequence is Peptidyl-prolyl cis-trans isomerase FKBP53 (477 aa).

Disordered stretches follow at residues aspartate 104–glutamine 135 and alanine 153–threonine 366. The segment covering lysine 264–lysine 274 has biased composition (basic residues). The segment covering isoleucine 299–serine 321 has biased composition (polar residues). Residues lysine 322–lysine 331 are compositionally biased toward basic and acidic residues. Positions valine 351–threonine 366 are enriched in polar residues. One can recognise a PPIase FKBP-type domain in the interval glycine 389–glutamine 477.

Belongs to the FKBP-type PPIase family. As to quaternary structure, interacts with histone H3. Broadly expressed in leaves, flowers, stems and roots. Detected in root apical meristem region and pollen.

The protein localises to the nucleus. The enzyme catalyses [protein]-peptidylproline (omega=180) = [protein]-peptidylproline (omega=0). PPIases accelerate the folding of proteins. It catalyzes the cis-trans isomerization of proline imidic peptide bonds in oligopeptides. Histone chaperone possibly involved in H3/H4 deposition to the nucleosome. Associates with 18S rDNA chromatin and negatively regulates the level of its expression. In Arabidopsis thaliana (Mouse-ear cress), this protein is Peptidyl-prolyl cis-trans isomerase FKBP53 (FKBP53).